We begin with the raw amino-acid sequence, 587 residues long: MAKESIRRRLAAILAADAVGYSRLMERDEKSTHTLLMARWKEVLEPLVGIHQGRVFKRTGDGVLVEFGSAVNAVECAAALQQAMAAANRDLPEDRAIVLRVGVNLGDIMVEDSDLFGDGVNVAARIEALADPGGVAISDGIHEYVHGRTDIDFVDSGYHEVKNIERPVHIWTWSPKDRAREPPNIAAEPPPQLPAKPSIAVLPFDNMSGDPEQGYFADGITEDIITDLSKVSGLFVIARNSSFAYKGKTPDIRKVSRELGVRYVLEGSVRRAANRIRINAQMIDGTTGGHLWAERYDRGLEDIFAVQDEVTRTIVNALRVKLTAGEEERRESRGKVDPEAYDLLVRSRQAILQFNALSSMEARRMLHRVLEIDPGMAAAHASLSIIALTDFINQWNGATPDNLTQALGLAQEAIDTDGSEPQGHYTLALALSWMRRLDEAEHAAERAIELDPNSANAYTALGTIRDFQGRHEEALALYTRAHRLDPQFDLSLHFQGRALLNLGRFDEAEVAFKRRLLLAPRSDMTRFYLACLYGRTGRHEEARGYWREVLGVNPSFSVDHLRRSLPYQDPHLMDRLVEGLREAGVSI.

A Guanylate cyclase domain is found at 12–127; sequence AILAADAVGY…DGVNVAARIE (116 aa). TPR repeat units follow at residues 343 to 376, 421 to 454, 455 to 488, 490 to 522, and 524 to 556; these read LLVR…DPGM, PQGH…DPNS, ANAY…DPQF, LSLH…APRS, and MTRF…NPSF.

Belongs to the adenylyl cyclase class-3 family.

The enzyme catalyses ATP = 3',5'-cyclic AMP + diphosphate. In Rhizobium meliloti (strain 1021) (Ensifer meliloti), this protein is Putative adenylate cyclase 3 (cya3).